The chain runs to 394 residues: NAD(P)H-quinone oxidoreductase subunit H (394 aa).

This sequence belongs to the complex I 49 kDa subunit family. As to quaternary structure, NDH-1 can be composed of about 15 different subunits; different subcomplexes with different compositions have been identified which probably have different functions.

It is found in the cellular thylakoid membrane. The enzyme catalyses a plastoquinone + NADH + (n+1) H(+)(in) = a plastoquinol + NAD(+) + n H(+)(out). It carries out the reaction a plastoquinone + NADPH + (n+1) H(+)(in) = a plastoquinol + NADP(+) + n H(+)(out). In terms of biological role, NDH-1 shuttles electrons from an unknown electron donor, via FMN and iron-sulfur (Fe-S) centers, to quinones in the respiratory and/or the photosynthetic chain. The immediate electron acceptor for the enzyme in this species is believed to be plastoquinone. Couples the redox reaction to proton translocation, and thus conserves the redox energy in a proton gradient. Cyanobacterial NDH-1 also plays a role in inorganic carbon-concentration. The chain is NAD(P)H-quinone oxidoreductase subunit H from Synechococcus sp. (strain ATCC 27144 / PCC 6301 / SAUG 1402/1) (Anacystis nidulans).